A 124-amino-acid polypeptide reads, in one-letter code: Small ribosomal subunit protein uS13 (124 aa).

Residues 94 to 124 (GLPLRGQRTKNNSRTRKGRRKTVANKKKATK) form a disordered region. Residues 100–124 (QRTKNNSRTRKGRRKTVANKKKATK) show a composition bias toward basic residues.

This sequence belongs to the universal ribosomal protein uS13 family. In terms of assembly, part of the 30S ribosomal subunit. Forms a loose heterodimer with protein S19. Forms two bridges to the 50S subunit in the 70S ribosome.

Functionally, located at the top of the head of the 30S subunit, it contacts several helices of the 16S rRNA. In the 70S ribosome it contacts the 23S rRNA (bridge B1a) and protein L5 of the 50S subunit (bridge B1b), connecting the 2 subunits; these bridges are implicated in subunit movement. Contacts the tRNAs in the A and P-sites. The sequence is that of Small ribosomal subunit protein uS13 from Christiangramia forsetii (strain DSM 17595 / CGMCC 1.15422 / KT0803) (Gramella forsetii).